The primary structure comprises 90 residues: Essential MCU regulator, mitochondrial (90 aa).

The chain crosses the membrane as a helical span at residues 49-68 (GVLKLIFVSASSLYIGGLIA).

The protein belongs to the SMDT1/EMRE family.

The protein localises to the mitochondrion inner membrane. In terms of biological role, essential regulatory subunit of the mitochondrial calcium uniporter (mcu-1) channel, a protein that mediates calcium uptake into mitochondria. This chain is Essential MCU regulator, mitochondrial, found in Caenorhabditis elegans.